We begin with the raw amino-acid sequence, 741 residues long: HSP-interacting protein (741 aa).

TPR repeat units follow at residues 26 to 59, 65 to 100, and 102 to 134; these read SREL…LPAG, AHLR…VPRY, and RALL…EPGN. A disordered region spans residues 168 to 270; that stretch reads ASAKGEERKK…GESKQQKHSA (103 aa). Over residues 171 to 184 the composition is skewed to basic and acidic residues; it reads KGEERKKSRNKRFD. Polar residues predominate over residues 201–218; that stretch reads SASTEKQAGPRQTNGTGN. A compositionally biased stretch (basic and acidic residues) spans 219-247; sequence HQDHTEDSESNGLEKLEQSTETGEKDMGK. Basic residues predominate over residues 248-258; it reads KRGAHAAGKKP. Positions 285 to 364 constitute a PB1 domain; the sequence is MKDVKLVFGE…VPIRFYVVEV (80 aa). 4 TPR repeats span residues 496–530, 532–557, 558–591, and 628–663; these read EFIL…KSDF, EGLI…ACKI, NMET…RLKG, and SHIN…AMEK.

Interacts (via C-terminus) with O1. Interacts (via C-terminus) with OP10 (via N-terminus).

Acts as a co-chaperone for HSP90 and is required for proper folding of the myosin motor domain. This chain is HSP-interacting protein, found in Zea mays (Maize).